A 501-amino-acid chain; its full sequence is MEKVREIVREGRRVGKEDPRRVVHAFKVGLALALVSSFYYYQPLYDNFGVNAMWAVMTVVVVFEFSVGATLGKGLNRAVATLVAGGLGIGAHHLASLSGPTVEPILLAIFVFVLAALSTFVRFFPRVKARYDYGVLIFILTFALISVSGFREDEILDLAHKRLSTVIMGGVSCVLISIFVCPVWAGQDLHSLLASNFDTLSHFLQEFGDEYFEATEDGDIKEVEKRRRNLERYKSVLNSKSNEEALANFAKWEPRHGQFRFRHPWRQYLAVGALLRQSAYRIDALNSNINSDMQIPMDIKKKIEEPLRRMSSESGKSMKEVSISLKNMTISSSFDIHVVNSQSACKTLSTLLKSGILNDVEPLQMISLMTTVSLLIDIVNLTEKISESVHELASAAKFKNKKKPSKSNSGSIGQAMPNKSHDDDDHVVTILGDVDTSNNVDQSQSHGEISVDSCHHVTIKINDDDSIHDKNEDGDIHVHTNRVSCDHTNASDLLDSGVKKN.

A run of 6 helical transmembrane segments spans residues 22–42 (VVHAFKVGLALALVSSFYYYQ), 52–72 (AMWAVMTVVVVFEFSVGATLG), 78–98 (AVATLVAGGLGIGAHHLASLS), 101–121 (TVEPILLAIFVFVLAALSTFV), 130–150 (RYDYGVLIFILTFALISVSGF), and 166–186 (VIMGGVSCVLISIFVCPVWAG). Residues 398 to 425 (FKNKKKPSKSNSGSIGQAMPNKSHDDDD) form a disordered region.

This sequence belongs to the aromatic acid exporter (TC 2.A.85) family.

Its subcellular location is the membrane. Functionally, malate transporter. This chain is Aluminum-activated malate transporter 2 (ALMT2), found in Arabidopsis thaliana (Mouse-ear cress).